The chain runs to 88 residues: C-C motif chemokine 18 (88 aa).

The signal sequence occupies residues 1–19 (MKGLAAALLVLCTVALCSC). 2 cysteine pairs are disulfide-bonded: C29–C53 and C30–C69.

This sequence belongs to the intercrine beta (chemokine CC) family. In terms of processing, the Cys-29/Cys-53 disulfide bond is required for activity.

Its subcellular location is the secreted. In terms of biological role, chemotactic factor that attracts lymphocytes but not monocytes or granulocytes. May be involved in B-cell migration into B-cell follicles in lymph nodes. Attracts naive T-lymphocytes toward dendritic cells and activated macrophages in lymph nodes, has chemotactic activity for naive T-cells, CD4+ and CD8+ T-cells and thus may play a role in both humoral and cell-mediated immunity responses. This is C-C motif chemokine 18 (CCL18) from Macaca mulatta (Rhesus macaque).